A 1036-amino-acid polypeptide reads, in one-letter code: Putative GPI-anchored protein pfl2 (1036 aa).

An N-terminal signal peptide occupies residues 1–23; the sequence is MKFFTASTLFLLAAQSLNSGVSA. Asn-66, Asn-97, Asn-165, Asn-201, Asn-233, Asn-259, Asn-277, Asn-296, Asn-312, Asn-331, Asn-347, Asn-363, Asn-379, Asn-395, Asn-410, Asn-429, Asn-445, Asn-461, Asn-477, Asn-493, Asn-509, Asn-524, Asn-543, Asn-559, and Asn-573 each carry an N-linked (GlcNAc...) asparagine glycan. 2 disordered regions span residues 88 to 130 and 147 to 183; these read SSSL…SSLA and SSLASSSTTSSSLASSSTNSTTSATPTSSATSSSLSS. The span at 243–585 shows a compositional bias: low complexity; that stretch reads SSISSTVSSS…ITSSASGSTG (343 aa). A disordered region spans residues 243–710; it reads SSISSTVSSS…PLSNSTVAPT (468 aa). Positions 586-595 are enriched in polar residues; sequence EFTNTNSGNG. The segment covering 597 to 630 has biased composition (low complexity); sequence VSGSVTTPTSTPLSNSTVAPTSTFTSSGFNTTSG. N-linked (GlcNAc...) asparagine glycosylation is found at Asn-611, Asn-626, Asn-642, Asn-657, Asn-673, Asn-688, Asn-704, Asn-719, and Asn-735. Residues 631–647 are compositionally biased toward polar residues; it reads LPTSSASTPLSNSTVAP. The span at 648–692 shows a compositional bias: low complexity; the sequence is TSTFTSSGFNTTSGLPTSSASTPSSNSSIVPTSTFTSSGFNTTSG. Over residues 693 to 709 the composition is skewed to polar residues; that stretch reads LPTSSASTPLSNSTVAP. Composition is skewed to low complexity over residues 722 to 831, 838 to 862, and 885 to 906; these read SGLP…TTAS, PTAAPTNEPTVTTGTETTEGTATYT, and IPVNPGNPSSSVSAPPTTSFTP. Disordered regions lie at residues 722–862 and 885–918; these read SGLP…ATYT and IPVNPGNPSSSVSAPPTTSFTPGPGGSGYPSYSN. 7 N-linked (GlcNAc...) asparagine glycosylation sites follow: Asn-918, Asn-924, Asn-930, Asn-933, Asn-939, Asn-947, and Asn-977. The disordered stretch occupies residues 978–1011; sequence TTATSGSDDDVKTASTSSSTSYTSSSSSSSSTTS. Positions 990–1011 are enriched in low complexity; sequence TASTSSSTSYTSSSSSSSSTTS. A lipid anchor (GPI-anchor amidated serine) is attached at Ser-1011. A propeptide spans 1012–1036 (removed in mature form); the sequence is AASSKASVSMGLNGLMIAAVILLVA.

The protein resides in the cell membrane. Its function is as follows. May be involved in agglutination during conjugation or other aspects of colony formation. Induces flocculation when overexpressed. The polypeptide is Putative GPI-anchored protein pfl2 (Schizosaccharomyces pombe (strain 972 / ATCC 24843) (Fission yeast)).